The following is a 120-amino-acid chain: uncharacterized protein (120 aa).

The protein to the N-terminal region of phage HK97/HK620 Gp37/hpaH.

This is an uncharacterized protein from Escherichia coli (strain K12).